The chain runs to 252 residues: ATP synthase subunit a (252 aa).

Transmembrane regions (helical) follow at residues 29 to 49 (FTNS…FLFL), 87 to 107 (FFPL…LGLF), 117 to 137 (IIVT…YGFM), 146 to 166 (LFVP…IEVI), 188 to 208 (ITLK…AVGV), and 211 to 231 (SILP…VAFL).

Belongs to the ATPase A chain family. F-type ATPases have 2 components, CF(1) - the catalytic core - and CF(0) - the membrane proton channel. CF(1) has five subunits: alpha(3), beta(3), gamma(1), delta(1), epsilon(1). CF(0) has three main subunits: a(1), b(2) and c(9-12). The alpha and beta chains form an alternating ring which encloses part of the gamma chain. CF(1) is attached to CF(0) by a central stalk formed by the gamma and epsilon chains, while a peripheral stalk is formed by the delta and b chains.

The protein resides in the cell inner membrane. Functionally, key component of the proton channel; it plays a direct role in the translocation of protons across the membrane. The chain is ATP synthase subunit a from Mesorhizobium japonicum (strain LMG 29417 / CECT 9101 / MAFF 303099) (Mesorhizobium loti (strain MAFF 303099)).